We begin with the raw amino-acid sequence, 169 residues long: Photosystem I assembly protein Ycf3 (169 aa).

TPR repeat units follow at residues 35 to 68, 72 to 105, and 120 to 153; these read AFTYYRDGMSAQSEGEYAEASQNYYEAMRLEIDP, SYILHNIGLIHTSNGEHARALEYYFQALERNPSL, and GEQAIQQGDFETSEAWFGKAADHWKQAVLLAPGN.

This sequence belongs to the Ycf3 family.

Its subcellular location is the plastid. The protein localises to the chloroplast thylakoid membrane. Its function is as follows. Essential for the assembly of the photosystem I (PSI) complex. May act as a chaperone-like factor to guide the assembly of the PSI subunits. The chain is Photosystem I assembly protein Ycf3 from Huperzia lucidula (Shining clubmoss).